A 504-amino-acid chain; its full sequence is Trifunctional (S)-stylopine synthase/(S)-nandinine synthase/(S)-canadine synthase (504 aa).

Residues 16-36 (SSTTTTTTILLSLLFTIFIIL) form a helical membrane-spanning segment. Cys-448 provides a ligand contact to heme.

It belongs to the cytochrome P450 family. Heme serves as cofactor. In terms of tissue distribution, expressed in roots and at lower levels in stems, leaves and plantlets.

It is found in the endoplasmic reticulum membrane. The enzyme catalyses (S)-cheilanthifoline + reduced [NADPH--hemoprotein reductase] + O2 = (S)-stylopine + oxidized [NADPH--hemoprotein reductase] + 2 H2O + H(+). The catalysed reaction is (S)-tetrahydrocolumbamine + reduced [NADPH--hemoprotein reductase] + O2 = (S)-canadine + oxidized [NADPH--hemoprotein reductase] + 2 H2O + H(+). It catalyses the reaction (S)-scoulerine + reduced [NADPH--hemoprotein reductase] + O2 = (S)-nandinine + oxidized [NADPH--hemoprotein reductase] + 2 H2O + H(+). Methylenedioxy bridge-forming cytochrome P450 involved in the biosynthesis of isoquinoline alkaloids. Converts (S)-cheilanthifoline to (S)-stylopine, (S)-scoulerine to (S)-nandinine and (S)-tetrahydrocolumbamine to (S)-canadine. Can be involved in both sanguinarine and berberine biosynthesis. Catalyzes an oxidative reaction that does not incorporate oxygen into the product. This Argemone mexicana (Mexican prickly poppy) protein is Trifunctional (S)-stylopine synthase/(S)-nandinine synthase/(S)-canadine synthase.